The sequence spans 643 residues: Phosphatidylinositol-3,5-bisphosphate 3-phosphatase MTMR2 (643 aa).

The tract at residues 1–52 (MEKSSSCESLGAQLPAARLPSEDSLSSASTSHSENSVHTKSASAISSDSIST) is disordered. 2 positions are modified to phosphoserine: serine 6 and serine 9. Positions 23–40 (DSLSSASTSHSENSVHTK) are enriched in polar residues. Low complexity predominate over residues 41-52 (SASAISSDSIST). Position 58 is a phosphoserine (serine 58). Residues 68 to 139 (NKLAEMEEPA…GVISRVEKIG (72 aa)) form the GRAM domain. The region spanning 205-580 (GWKLYDPLLE…RHLELWVGYY (376 aa)) is the Myotubularin phosphatase domain. Asparagine 330, asparagine 355, and isoleucine 356 together coordinate a 1,2-diacyl-sn-glycero-3-phospho-(1D-myo-inositol-3,5-bisphosphate). A 1,2-diacyl-sn-glycero-3-phospho-(1D-myo-inositol-3-phosphate)-binding residues include asparagine 330, asparagine 355, and isoleucine 356. Catalysis depends on cysteine 417, which acts as the Phosphocysteine intermediate. A 1,2-diacyl-sn-glycero-3-phospho-(1D-myo-inositol-3,5-bisphosphate)-binding residues include serine 418, aspartate 419, glycine 420, tryptophan 421, aspartate 422, arginine 423, arginine 459, and arginine 463. Residues serine 418, aspartate 419, glycine 420, tryptophan 421, aspartate 422, and arginine 423 each coordinate a 1,2-diacyl-sn-glycero-3-phospho-(1D-myo-inositol-3-phosphate). Arginine 463 is a binding site for a 1,2-diacyl-sn-glycero-3-phospho-(1D-myo-inositol-3-phosphate). The stretch at 593-627 (IHSRYKELLAKRAELQRKVEELQREISNRSTSSSE) forms a coiled coil. The segment at 614–643 (LQREISNRSTSSSERASSPAQCVTPVQTVV) is disordered. Positions 620–631 (NRSTSSSERASS) are enriched in low complexity. Over residues 632-643 (PAQCVTPVQTVV) the composition is skewed to polar residues.

The protein belongs to the protein-tyrosine phosphatase family. Non-receptor class myotubularin subfamily. In terms of assembly, homodimer (via coiled-coil domain). Heterotetramer consisting of one MTMR2 dimer and one SBF2/MTMR13 dimer; specifically in peripheral nerves stabilizes SBF2/MTMR13 at the membranes and increases MTMR2 catalytic activity towards phosphatidylinositol 3,5-bisphosphate and to a lesser extent towards phosphatidylinositol 3-phosphate. Heterodimer with SBF1/MTMR5; acts as an adapter for the phosphatase MTMR2 to regulate MTMR2 catalytic activity and subcellular location. Heterodimer with MTMR12. In terms of processing, phosphorylation at Ser-58 decreases MTMR2 localization to endocytic vesicular structures. In terms of tissue distribution, expressed in sciatic nerve and in Schwann cells (at protein level). Detected in adult dorsal root ganglia, neurons of the central nervous system, motor neurons, cell soma and neurites of sensory neurons, olfactory bulb, cerebellum and hippocampus.

It localises to the cytoplasm. Its subcellular location is the early endosome membrane. It is found in the perinuclear region. The protein localises to the cell projection. The protein resides in the axon. It localises to the endosome membrane. The enzyme catalyses a 1,2-diacyl-sn-glycero-3-phospho-(1D-myo-inositol-3,5-bisphosphate) + H2O = a 1,2-diacyl-sn-glycero-3-phospho-(1D-myo-inositol-5-phosphate) + phosphate. It catalyses the reaction a 1,2-diacyl-sn-glycero-3-phospho-(1D-myo-inositol-3-phosphate) + H2O = a 1,2-diacyl-sn-glycero-3-phospho-(1D-myo-inositol) + phosphate. It carries out the reaction 1,2-dioctanoyl-sn-glycero-3-phospho-(1-D-myo-inositol-3-phosphate) + H2O = 1,2-dioctanoyl-sn-glycero-3-phospho-(1D-myo-inositol) + phosphate. The catalysed reaction is 1,2-dioctanoyl-sn-glycero-3-phospho-(1D-myo-inositol-3,5-bisphosphate) + H2O = 1,2-dioctanoyl-sn-glycero-3-phospho-(1D-myo-inositol-5-phosphate) + phosphate. In terms of biological role, lipid phosphatase that specifically dephosphorylates the D-3 position of phosphatidylinositol 3-phosphate and phosphatidylinositol 3,5-bisphosphate, generating phosphatidylinositol and phosphatidylinositol 5-phosphate. Regulates the level of these phosphoinositides critical for various biological processes including autophagy initiation and autophagosome maturation. This is Phosphatidylinositol-3,5-bisphosphate 3-phosphatase MTMR2 from Mus musculus (Mouse).